Reading from the N-terminus, the 351-residue chain is MTASSRNVRFNVSDDYEILDVIGEGAYGIVCSAIHKPSGQKVAIKKISPFDHSMFCLRTLREMKLLRYFNHENIISILDIQQPQDFESFSEVYLIQELMETDMHRVIRTQDLSDDHCQYFIYQILRALKAMHSADILHRDLKPSNLLLNANCDLKVCDFGLARSAVSTEDSSSFMTEYVATRWYRAPEIMLTFKEYTKAIDIWSVGCILAEMLSGRPLFPGKDYHHQLMLILDVLGTPTMEDYYGIKSRRAREYIRSLPFKKRVSFASIFPRANPLALDLLEKLLAFNPAKRVTAEEALQHNYLEPYHDPDDEPTAPPISPSFFDFDRIKDSLTKNDLKILIYKEIMSMNN.

The 289-residue stretch at 16-304 (YEILDVIGEG…AEEALQHNYL (289 aa)) folds into the Protein kinase domain. Residues 22 to 30 (IGEGAYGIV) and Lys-45 each bind ATP. Residue Asp-140 is the Proton acceptor of the active site. Position 176 is a phosphothreonine (Thr-176). The TXY signature appears at 176–178 (TEY). A Phosphotyrosine modification is found at Tyr-178.

The protein belongs to the protein kinase superfamily. CMGC Ser/Thr protein kinase family. MAP kinase subfamily. Requires Mg(2+) as cofactor. Mn(2+) is required as a cofactor. Dually phosphorylated on Thr-176 and Tyr-178, which activates the enzyme.

It is found in the nucleus. The catalysed reaction is L-seryl-[protein] + ATP = O-phospho-L-seryl-[protein] + ADP + H(+). It catalyses the reaction L-threonyl-[protein] + ATP = O-phospho-L-threonyl-[protein] + ADP + H(+). With respect to regulation, activated by tyrosine and threonine phosphorylation. Inhibited by the MEK inhibitor U0126 but not by the p38 inhibitor SB203580. Cobalt abolishes kinase activity, while calcium, copper and nickel have little effect on kinase activity. Serine-threonine protein kinase which may be involved in pheromone signaling. Functionally complements the MAPK pheromone signaling pathway in S.cerevisiae. The polypeptide is Mitogen-activated protein kinase 2 (Pneumocystis carinii).